Here is a 291-residue protein sequence, read N- to C-terminus: MAKVAFIGLGVMGFPMAGHLVKQGHDVTVYNRTGAKATQWVEQYGGKKADTPKDAAQGQDIVFTCVGNDDDLRQVVLGEHGIVHGMHAGAILVDHTTASADVAREIAAYIEPLNIAFLDAPVSGGQAGAENGALTVMMGGDQAHFDTVKPVISAYSRCAELLGPVGAGQLTKMVNQICIAGVVQGLAEGLHFAKSAGLDGLKVIEVISKGAAQSWQMENRYKTMWQGQYDFGFAIDWMRKDLGIALDEARRNGSHLPVAALVDQFYSEVQAMKGNRWDTSSLLARLEKSRS.

NAD(+)-binding positions include 5–19 and T97; that span reads AFIG…MAGH. K172 is a catalytic residue. An NAD(+)-binding site is contributed by K240.

This sequence belongs to the HIBADH-related family.

This is an uncharacterized protein from Shewanella frigidimarina (strain NCIMB 400).